Consider the following 156-residue polypeptide: MENEKNYRPNVAAIVLSSSYPFECKIFIAKRSDMDNIWQFPQGGIDKGESAKNALFRELKEEIGTDEVEIIAEYPEWLSYDFPGKIVKKMYPYDGQIQKYFLVRLKHGATININTKHPEFDDYQFVSVKQIFEMINHFKKNIYVKVIKYFEEKGYI.

The region spanning 6 to 148 (NYRPNVAAIV…KKNIYVKVIK (143 aa)) is the Nudix hydrolase domain. A Nudix box motif is present at residues 43-64 (GGIDKGESAKNALFRELKEEIG).

Belongs to the Nudix hydrolase family. RppH subfamily. Requires a divalent metal cation as cofactor.

Accelerates the degradation of transcripts by removing pyrophosphate from the 5'-end of triphosphorylated RNA, leading to a more labile monophosphorylated state that can stimulate subsequent ribonuclease cleavage. In Campylobacter jejuni subsp. doylei (strain ATCC BAA-1458 / RM4099 / 269.97), this protein is RNA pyrophosphohydrolase.